The following is a 244-amino-acid chain: uncharacterized protein (244 aa).

The 69-residue stretch at 12 to 80 (VALWRQIADR…QGRGTMIERK (69 aa)) folds into the HTH gntR-type domain. The segment at residues 40–59 (ETALAAEFGVNRHTVRSALA) is a DNA-binding region (H-T-H motif).

This is an uncharacterized protein from Rhizobium meliloti (strain 1021) (Ensifer meliloti).